Here is a 379-residue protein sequence, read N- to C-terminus: Cytochrome b (379 aa).

4 helical membrane passes run 34–54 (YGSL…MLAM), 78–100 (WMIR…VHIG), 113–133 (TWNI…LGYV), and 179–199 (FFSL…IHLL). 2 residues coordinate heme b: His-84 and His-98. The heme b site is built by His-183 and His-197. A ubiquinone is bound at residue His-202. A run of 4 helical transmembrane segments spans residues 225-245 (FSIK…FLVL), 289-309 (LGGV…PIFS), 320-340 (WSGM…WIGA), and 345-365 (APYI…FFWM).

Belongs to the cytochrome b family. As to quaternary structure, the main subunits of complex b-c1 are: cytochrome b, cytochrome c1 and the Rieske protein. Heme b serves as cofactor.

It localises to the mitochondrion inner membrane. In terms of biological role, component of the ubiquinol-cytochrome c reductase complex (complex III or cytochrome b-c1 complex) that is part of the mitochondrial respiratory chain. The b-c1 complex mediates electron transfer from ubiquinol to cytochrome c. Contributes to the generation of a proton gradient across the mitochondrial membrane that is then used for ATP synthesis. This chain is Cytochrome b (mt:Cyt-b), found in Epiperipatus biolleyi (Velvet worm).